A 113-amino-acid polypeptide reads, in one-letter code: Small ribosomal subunit protein bS6 (113 aa).

The protein belongs to the bacterial ribosomal protein bS6 family.

In terms of biological role, binds together with bS18 to 16S ribosomal RNA. This is Small ribosomal subunit protein bS6 (rpsF) from Synechocystis sp. (strain ATCC 27184 / PCC 6803 / Kazusa).